The chain runs to 85 residues: U1-ctenitoxin-Pn1a (85 aa).

The first 16 residues, 1–16 (MKVAIVFLSLLVLAFA), serve as a signal peptide directing secretion. Residues 17 to 34 (SESIEENREEFPVEESAR) constitute a propeptide that is removed on maturation. 5 disulfide bridges follow: Cys35–Cys49, Cys42–Cys55, Cys46–Cys81, Cys48–Cys65, and Cys57–Cys63. Positions 82–85 (QNKI) are excised as a propeptide.

This sequence belongs to the neurotoxin 03 (Tx2) family. 05 subfamily. As to expression, expressed by the venom gland.

Its subcellular location is the secreted. Functionally, insecticidal neurotoxin that reversibly inhibits the N-methyl-D-aspartate (NMDA)-subtype of ionotropic glutamate receptor (GRIN) and inhibits inactivation of insect sodium channels (Nav). In vivo, is highly toxic to insects. The sequence is that of U1-ctenitoxin-Pn1a from Phoneutria nigriventer (Brazilian armed spider).